A 433-amino-acid polypeptide reads, in one-letter code: Adenylyltransferase and sulfurtransferase UBA4 (433 aa).

ATP contacts are provided by residues G70, D91, 98–102 (SNLHR), K115, and 159–160 (DT). 2 residues coordinate Zn(2+): C201 and C204. Catalysis depends on C218, which acts as the Glycyl thioester intermediate; for adenylyltransferase activity. Zn(2+) contacts are provided by C279 and C282. In terms of domain architecture, Rhodanese spans 332–431 (SGNNKVLLDV…YIDDVDQSIP (100 aa)). C390 acts as the Cysteine persulfide intermediate; for sulfurtransferase activity in catalysis.

The protein in the N-terminal section; belongs to the HesA/MoeB/ThiF family. UBA4 subfamily. Zn(2+) serves as cofactor.

The protein localises to the cytoplasm. It is found in the cytosol. The protein operates within tRNA modification; 5-methoxycarbonylmethyl-2-thiouridine-tRNA biosynthesis. Functionally, plays a central role in 2-thiolation of mcm(5)S(2)U at tRNA wobble positions of cytosolic tRNA(Lys), tRNA(Glu) and tRNA(Gln). Acts by mediating the C-terminal thiocarboxylation of sulfur carrier URM1. Its N-terminus first activates URM1 as acyl-adenylate (-COAMP), then the persulfide sulfur on the catalytic cysteine is transferred to URM1 to form thiocarboxylation (-COSH) of its C-terminus. The reaction probably involves hydrogen sulfide that is generated from the persulfide intermediate and that acts as a nucleophile towards URM1. Subsequently, a transient disulfide bond is formed. Does not use thiosulfate as sulfur donor; NFS1 probably acting as a sulfur donor for thiocarboxylation reactions. Prior mcm(5) tRNA modification by the elongator complex is required for 2-thiolation. May also be involved in protein urmylation. The polypeptide is Adenylyltransferase and sulfurtransferase UBA4 (Candida glabrata (strain ATCC 2001 / BCRC 20586 / JCM 3761 / NBRC 0622 / NRRL Y-65 / CBS 138) (Yeast)).